The following is a 355-amino-acid chain: Peptide chain release factor 1 (355 aa).

The residue at position 233 (Gln233) is an N5-methylglutamine.

This sequence belongs to the prokaryotic/mitochondrial release factor family. Post-translationally, methylated by PrmC. Methylation increases the termination efficiency of RF1.

It is found in the cytoplasm. In terms of biological role, peptide chain release factor 1 directs the termination of translation in response to the peptide chain termination codons UAG and UAA. The protein is Peptide chain release factor 1 of Caldicellulosiruptor saccharolyticus (strain ATCC 43494 / DSM 8903 / Tp8T 6331).